We begin with the raw amino-acid sequence, 159 residues long: Endoribonuclease YbeY (159 aa).

Residues His-114, His-118, and His-124 each coordinate Zn(2+).

It belongs to the endoribonuclease YbeY family. The cofactor is Zn(2+).

The protein resides in the cytoplasm. In terms of biological role, single strand-specific metallo-endoribonuclease involved in late-stage 70S ribosome quality control and in maturation of the 3' terminus of the 16S rRNA. The polypeptide is Endoribonuclease YbeY (Pectobacterium carotovorum subsp. carotovorum (strain PC1)).